An 80-amino-acid chain; its full sequence is Translation initiation factor IF-1, chloroplastic (80 aa).

In terms of domain architecture, S1-like spans 1–74; the sequence is MKEQKWIHEG…TRGRIIYRLR (74 aa).

It belongs to the IF-1 family. Component of the 30S ribosomal translation pre-initiation complex which assembles on the 30S ribosome in the order IF-2 and IF-3, IF-1 and N-formylmethionyl-tRNA(fMet); mRNA recruitment can occur at any time during PIC assembly.

The protein localises to the plastid. It localises to the chloroplast. Its function is as follows. One of the essential components for the initiation of protein synthesis. Stabilizes the binding of IF-2 and IF-3 on the 30S subunit to which N-formylmethionyl-tRNA(fMet) subsequently binds. Helps modulate mRNA selection, yielding the 30S pre-initiation complex (PIC). Upon addition of the 50S ribosomal subunit IF-1, IF-2 and IF-3 are released leaving the mature 70S translation initiation complex. This Illicium parviflorum (Yellow anise tree) protein is Translation initiation factor IF-1, chloroplastic.